A 234-amino-acid polypeptide reads, in one-letter code: uncharacterized protein (234 aa).

The helical transmembrane segment at 13 to 32 (KSINYYIFFFQYTLVYNTIQ) threads the bilayer. 2 disordered regions span residues 102–130 (HSKTTSLPFSSSSPQSSSSSSSSSSSSNS) and 159–185 (ESDSKSDSEFDSESNSDFDSESESEYE). Positions 103–130 (SKTTSLPFSSSSPQSSSSSSSSSSSSNS) are enriched in low complexity. Over residues 167 to 185 (EFDSESNSDFDSESESEYE) the composition is skewed to acidic residues.

The protein resides in the membrane. This is an uncharacterized protein from Dictyostelium discoideum (Social amoeba).